Here is a 67-residue protein sequence, read N- to C-terminus: Protein Tpau_2998 (67 aa).

This chain is Protein Tpau_2998, found in Tsukamurella paurometabola (strain ATCC 8368 / DSM 20162 / CCUG 35730 / CIP 100753 / JCM 10117 / KCTC 9821 / NBRC 16120 / NCIMB 702349 / NCTC 13040) (Corynebacterium paurometabolum).